The following is a 519-amino-acid chain: MTMQTITAVSGNDDAATHGAAAPPGGALLSLDGITVTFPGVRALDAVSLSVRAGEVHGLMGENGAGKSTLLKVLSGVNQPQAGTLTLNGTVQRFASTRAALEAGIAIIYQELHLVPELTVAENLMLGQLPSRLGVVDERALAVRALDALERLGEHIDPDIPVKYLSIGQRQMIEIGKALMRDARVIAFDEPTSSLSARETTQLFRIIRSLRAEGRAIIYVTHRMEEVDALCDRVTVFRDGRRIETFESVAELDRDQLIGCMVGRSIEDVYGYRPRAAGDVMIEAKGLTGPGLSEPVSFAARRGEIVGFFGLVGAGRSELMKLLYGATRPSGGHVELGGKRVAFSSPRHAVRAGIALCPEDRKQEGIVAIASVADNLNISARRHFSPARVLLDARRERDLAQRYIERLAIKTPDGDTPIGALSGGNQQKVVLARWLAERIDVFLMDEPTRGIDVGARAEIYNLFYELAEAGRTVILVSSDLAEVIGVSDRIIVMKEGRIAGEVAKAQATPDALIKLALPR.

2 consecutive ABC transporter domains span residues 29–264 (LSLD…MVGR) and 264–515 (RSIE…LIKL). Residue 61 to 68 (GENGAGKS) coordinates ATP.

The protein belongs to the ABC transporter superfamily. Arabinose importer (TC 3.A.1.2.2) family. The complex is composed of two ATP-binding proteins (AraG), two transmembrane proteins (AraH) and a solute-binding protein (AraF).

Its subcellular location is the cell inner membrane. It carries out the reaction L-arabinose(out) + ATP + H2O = L-arabinose(in) + ADP + phosphate + H(+). In terms of biological role, part of the ABC transporter complex AraFGH involved in arabinose import. Responsible for energy coupling to the transport system. The sequence is that of Arabinose import ATP-binding protein AraG 2 from Burkholderia ambifaria (strain ATCC BAA-244 / DSM 16087 / CCUG 44356 / LMG 19182 / AMMD) (Burkholderia cepacia (strain AMMD)).